Here is a 785-residue protein sequence, read N- to C-terminus: Formin-like protein 3 (785 aa).

The N-terminal stretch at 1 to 20 (MGRLRLAFLAISLVVFVCVS) is a signal peptide. Positions 96–145 (YDWLAPASSPNEPPAETPDESSPSPSEETPSVVAPSQSVPGPPRPPPQRE) are disordered. Residues 115-134 (ESSPSPSEETPSVVAPSQSV) show a composition bias toward low complexity. Residues 154–174 (LIIAVASTAVLTFVFVALMFL) form a helical membrane-spanning segment. Disordered regions lie at residues 184-228 (AVGS…KKRS), 241-329 (EFST…APKT), and 730-785 (ETTK…SSPS). Residues 201–223 (STGSTENSPTVASTSRKMFSVAS) show a composition bias toward polar residues. Residues 256–303 (LKLPPGRSAPPPPPAAAPPPQPPPPPPPKPQPPPPPKIARPPPAPPKG) show a composition bias toward pro residues. One can recognise an FH2 domain in the interval 321–747 (DSETGAPKTK…SGKKESEMTT (427 aa)). Residues 745–754 (MTTSDSNQPS) are compositionally biased toward polar residues. The span at 773–785 (SDDSDDEEDSSPS) shows a compositional bias: acidic residues.

The protein belongs to the formin-like family. Class-I subfamily.

The protein resides in the membrane. In terms of biological role, acts as actin nucleation factor that directs the formation of actin cables and polarized growth in pollen tubes. The protein is Formin-like protein 3 (FH3) of Arabidopsis thaliana (Mouse-ear cress).